A 466-amino-acid chain; its full sequence is Alpha-1A adrenergic receptor (466 aa).

Over 1–27 the chain is Extracellular; the sequence is MVLLSENASEGSNCTHPPAQVNISKAI. N-linked (GlcNAc...) asparagine glycosylation is found at N7, N13, and N22. The helical transmembrane segment at 28 to 51 threads the bilayer; the sequence is LLGVILGGLIIFGVLGNILVILSV. The Cytoplasmic portion of the chain corresponds to 52–64; sequence ACHRHLHSVTHYY. Residues 65-88 traverse the membrane as a helical segment; sequence IVNLAVADLLLTSTVLPFSAIFEI. Topologically, residues 89 to 99 are extracellular; it reads LGYWAFGRVFC. A disulfide bridge connects residues C99 and C176. A helical transmembrane segment spans residues 100–122; it reads NIWAAVDVLCCTASIMGLCIISI. The Cytoplasmic segment spans residues 123–143; that stretch reads DRYIGVSYPLRYPTIVTQRRG. A helical transmembrane segment spans residues 144-167; sequence VRALLCVWALSLVISIGPLFGWRQ. Over 168-181 the chain is Extracellular; the sequence is QAPEDETICQINEE. Residues 182-205 traverse the membrane as a helical segment; that stretch reads PGYVLFSALGSFYVPLTIILVMYC. Topologically, residues 206-273 are cytoplasmic; it reads RVYVVAKRES…FSREKKAAKT (68 aa). S215 carries the phosphoserine; by PKA modification. A helical transmembrane segment spans residues 274–297; sequence LGIVVGCFVLCWLPFFLVMPIGSF. The Extracellular segment spans residues 298–305; that stretch reads FPNFKPPE. A helical membrane pass occupies residues 306-329; that stretch reads TVFKIVFWLGYLNSCINPIIYPCS. Topologically, residues 330–466 are cytoplasmic; that stretch reads SQEFKKAFQN…ISLGENGEEV (137 aa). Residues 334-349 carry the Nuclear localization signal motif; the sequence is KKAFQNVLRIQCLRRR. C345 carries the S-palmitoyl cysteine lipid modification.

It belongs to the G-protein coupled receptor 1 family. Adrenergic receptor subfamily. ADRA1A sub-subfamily. In terms of assembly, homo- and heterooligomer. Heterooligomerizes with ADRA1B homooligomers in cardiac myocytes. Interacts with CAVIN4.

The protein localises to the nucleus membrane. It is found in the cell membrane. Its subcellular location is the cytoplasm. The protein resides in the membrane. It localises to the caveola. Its function is as follows. This alpha-adrenergic receptor mediates its action by association with G proteins that activate a phosphatidylinositol-calcium second messenger system. Its effect is mediated by G(q) and G(11) proteins. Nuclear ADRA1A-ADRA1B heterooligomers regulate phenylephrine (PE)-stimulated ERK signaling in cardiac myocytes. The chain is Alpha-1A adrenergic receptor (Adra1a) from Mus musculus (Mouse).